We begin with the raw amino-acid sequence, 388 residues long: Succinate--CoA ligase [ADP-forming] subunit beta (388 aa).

The 236-residue stretch at Lys9–His244 folds into the ATP-grasp domain. ATP-binding positions include Lys46, Gly53 to Gly55, Glu99, Thr102, and Glu107. Residues Asn199 and Asp213 each contribute to the Mg(2+) site. Residues Asn264 and Gly321–Val323 each bind substrate.

Belongs to the succinate/malate CoA ligase beta subunit family. In terms of assembly, heterotetramer of two alpha and two beta subunits. Mg(2+) serves as cofactor.

It catalyses the reaction succinate + ATP + CoA = succinyl-CoA + ADP + phosphate. The catalysed reaction is GTP + succinate + CoA = succinyl-CoA + GDP + phosphate. The protein operates within carbohydrate metabolism; tricarboxylic acid cycle; succinate from succinyl-CoA (ligase route): step 1/1. Its function is as follows. Succinyl-CoA synthetase functions in the citric acid cycle (TCA), coupling the hydrolysis of succinyl-CoA to the synthesis of either ATP or GTP and thus represents the only step of substrate-level phosphorylation in the TCA. The beta subunit provides nucleotide specificity of the enzyme and binds the substrate succinate, while the binding sites for coenzyme A and phosphate are found in the alpha subunit. This chain is Succinate--CoA ligase [ADP-forming] subunit beta, found in Shewanella halifaxensis (strain HAW-EB4).